Here is a 446-residue protein sequence, read N- to C-terminus: Phosphoglucosamine mutase (446 aa).

Ser88 (phosphoserine intermediate) is an active-site residue. Residues Ser88, Asp231, Asp233, and Asp235 each coordinate Mg(2+). Ser88 carries the post-translational modification Phosphoserine.

This sequence belongs to the phosphohexose mutase family. Mg(2+) is required as a cofactor. In terms of processing, activated by phosphorylation.

The enzyme catalyses alpha-D-glucosamine 1-phosphate = D-glucosamine 6-phosphate. Its function is as follows. Catalyzes the conversion of glucosamine-6-phosphate to glucosamine-1-phosphate. The chain is Phosphoglucosamine mutase from Methanococcus vannielii (strain ATCC 35089 / DSM 1224 / JCM 13029 / OCM 148 / SB).